The following is a 228-amino-acid chain: Ribose-5-phosphate isomerase A (228 aa).

Substrate contacts are provided by residues 32–35 (TGST), 85–88 (DGAD), and 98–101 (KGGG). Glu107 serves as the catalytic Proton acceptor. Lys125 serves as a coordination point for substrate.

It belongs to the ribose 5-phosphate isomerase family. Homodimer.

The catalysed reaction is aldehydo-D-ribose 5-phosphate = D-ribulose 5-phosphate. It participates in carbohydrate degradation; pentose phosphate pathway; D-ribose 5-phosphate from D-ribulose 5-phosphate (non-oxidative stage): step 1/1. In terms of biological role, catalyzes the reversible conversion of ribose-5-phosphate to ribulose 5-phosphate. The chain is Ribose-5-phosphate isomerase A from Ralstonia nicotianae (strain ATCC BAA-1114 / GMI1000) (Ralstonia solanacearum).